We begin with the raw amino-acid sequence, 185 residues long: Ribosome-recycling factor (185 aa).

It belongs to the RRF family.

It is found in the cytoplasm. In terms of biological role, responsible for the release of ribosomes from messenger RNA at the termination of protein biosynthesis. May increase the efficiency of translation by recycling ribosomes from one round of translation to another. The sequence is that of Ribosome-recycling factor from Novosphingobium aromaticivorans (strain ATCC 700278 / DSM 12444 / CCUG 56034 / CIP 105152 / NBRC 16084 / F199).